A 316-amino-acid polypeptide reads, in one-letter code: Protoheme IX farnesyltransferase (316 aa).

A disordered region spans residues 1-21 (MAKSQALGNAPLTSTVAENAT). Residues 11 to 21 (PLTSTVAENAT) are compositionally biased toward polar residues. The next 9 helical transmembrane spans lie at 42–62 (VVAMLLLTALVGMCLAVPGIP), 67–87 (VILGLIGIGFQSAAAAAFNHV), 115–135 (VVFASTLMVMGFVILLELNAL), 136–156 (TAWLTMASLVGYAVVYTVWLK), 163–183 (IVIGGIAGAAPPLLGWTAVTG), 189–209 (ALLLVMLVFTWTPPHFWALAI), 235–255 (MVLLYTVMLFIVGLLPWLTGM), 256–276 (SGGVYLVGSSLLNLGFIGYAL), and 295–315 (IWHLLALFVVLLGDHWITSLM).

This sequence belongs to the UbiA prenyltransferase family. Protoheme IX farnesyltransferase subfamily.

The protein resides in the cell inner membrane. It catalyses the reaction heme b + (2E,6E)-farnesyl diphosphate + H2O = Fe(II)-heme o + diphosphate. The protein operates within porphyrin-containing compound metabolism; heme O biosynthesis; heme O from protoheme: step 1/1. Converts heme B (protoheme IX) to heme O by substitution of the vinyl group on carbon 2 of heme B porphyrin ring with a hydroxyethyl farnesyl side group. This Photobacterium profundum (strain SS9) protein is Protoheme IX farnesyltransferase.